A 435-amino-acid polypeptide reads, in one-letter code: Ribosomal protein uS12 methylthiotransferase RimO (435 aa).

Residues 3 to 113 (HKVGFVSLGC…VVNAVHQHLP (111 aa)) form the MTTase N-terminal domain. Residues cysteine 12, cysteine 48, cysteine 77, cysteine 144, cysteine 148, and cysteine 151 each coordinate [4Fe-4S] cluster. The Radical SAM core domain maps to 130 to 367 (LTPRHYAYLK…MQVQAEISRN (238 aa)). The TRAM domain maps to 370–435 (KNKIGSTQTV…DDYDLYASLV (66 aa)).

Belongs to the methylthiotransferase family. RimO subfamily. The cofactor is [4Fe-4S] cluster.

It localises to the cytoplasm. It carries out the reaction L-aspartate(89)-[ribosomal protein uS12]-hydrogen + (sulfur carrier)-SH + AH2 + 2 S-adenosyl-L-methionine = 3-methylsulfanyl-L-aspartate(89)-[ribosomal protein uS12]-hydrogen + (sulfur carrier)-H + 5'-deoxyadenosine + L-methionine + A + S-adenosyl-L-homocysteine + 2 H(+). Its function is as follows. Catalyzes the methylthiolation of an aspartic acid residue of ribosomal protein uS12. The polypeptide is Ribosomal protein uS12 methylthiotransferase RimO (Legionella pneumophila (strain Lens)).